A 160-amino-acid chain; its full sequence is NSKDADPIYVGKNNYKYALTHYETFKGKTISPAKVQNVKFRVEKIVRFHGKISGAPLYLVASKDKKYSCWTTQAMLQYYYFNSKGMRGVVNPLKRIANRSADKNIISLKNKQNKRDFNAAMKAANKLKGSQKKFVVNSLKQLKKDNNIGVEGDNLLLFGF.

This is an uncharacterized protein from Lactobacillus helveticus (Lactobacillus suntoryeus).